The sequence spans 284 residues: Phosphatidylserine decarboxylase proenzyme (284 aa).

Catalysis depends on charge relay system; for autoendoproteolytic cleavage activity residues Asp-88, His-145, and Ser-248. Ser-248 (schiff-base intermediate with substrate; via pyruvic acid; for decarboxylase activity) is an active-site residue. Ser-248 bears the Pyruvic acid (Ser); by autocatalysis mark.

Belongs to the phosphatidylserine decarboxylase family. PSD-B subfamily. Prokaryotic type I sub-subfamily. In terms of assembly, heterodimer of a large membrane-associated beta subunit and a small pyruvoyl-containing alpha subunit. Pyruvate is required as a cofactor. Post-translationally, is synthesized initially as an inactive proenzyme. Formation of the active enzyme involves a self-maturation process in which the active site pyruvoyl group is generated from an internal serine residue via an autocatalytic post-translational modification. Two non-identical subunits are generated from the proenzyme in this reaction, and the pyruvate is formed at the N-terminus of the alpha chain, which is derived from the carboxyl end of the proenzyme. The autoendoproteolytic cleavage occurs by a canonical serine protease mechanism, in which the side chain hydroxyl group of the serine supplies its oxygen atom to form the C-terminus of the beta chain, while the remainder of the serine residue undergoes an oxidative deamination to produce ammonia and the pyruvoyl prosthetic group on the alpha chain. During this reaction, the Ser that is part of the protease active site of the proenzyme becomes the pyruvoyl prosthetic group, which constitutes an essential element of the active site of the mature decarboxylase.

The protein localises to the cell membrane. The catalysed reaction is a 1,2-diacyl-sn-glycero-3-phospho-L-serine + H(+) = a 1,2-diacyl-sn-glycero-3-phosphoethanolamine + CO2. Its pathway is phospholipid metabolism; phosphatidylethanolamine biosynthesis; phosphatidylethanolamine from CDP-diacylglycerol: step 2/2. In terms of biological role, catalyzes the formation of phosphatidylethanolamine (PtdEtn) from phosphatidylserine (PtdSer). This Albidiferax ferrireducens (strain ATCC BAA-621 / DSM 15236 / T118) (Rhodoferax ferrireducens) protein is Phosphatidylserine decarboxylase proenzyme.